Reading from the N-terminus, the 582-residue chain is 2-succinyl-5-enolpyruvyl-6-hydroxy-3-cyclohexene-1-carboxylate synthase (582 aa).

The protein belongs to the TPP enzyme family. MenD subfamily. Homodimer. The cofactor is Mg(2+). Requires Mn(2+) as cofactor. Thiamine diphosphate serves as cofactor.

It carries out the reaction isochorismate + 2-oxoglutarate + H(+) = 5-enolpyruvoyl-6-hydroxy-2-succinyl-cyclohex-3-ene-1-carboxylate + CO2. It participates in quinol/quinone metabolism; 1,4-dihydroxy-2-naphthoate biosynthesis; 1,4-dihydroxy-2-naphthoate from chorismate: step 2/7. It functions in the pathway quinol/quinone metabolism; menaquinone biosynthesis. Catalyzes the thiamine diphosphate-dependent decarboxylation of 2-oxoglutarate and the subsequent addition of the resulting succinic semialdehyde-thiamine pyrophosphate anion to isochorismate to yield 2-succinyl-5-enolpyruvyl-6-hydroxy-3-cyclohexene-1-carboxylate (SEPHCHC). The sequence is that of 2-succinyl-5-enolpyruvyl-6-hydroxy-3-cyclohexene-1-carboxylate synthase from Chlorobaculum tepidum (strain ATCC 49652 / DSM 12025 / NBRC 103806 / TLS) (Chlorobium tepidum).